Here is a 493-residue protein sequence, read N- to C-terminus: MSELTALTIAEARDKLKAKAITATELTDAYLSAIDAANDAINAYVAVTHDQARSMAKASDERIAKGEAGALEGIPLGVKDLFATKGVHTQACSHILDGFKPEYESTVTANLWADGAVMLGKLNMDEFAMGSSNETSYYGPVKNPWRAKGSNADLVPGGSSGGSAAAVAAHLCAGATATDTGGSIRQPAAFTGTVGIKPTYGRVSRWGTVAFASSLDQAGPIARDVRDAAILMKSMASLDLKDTTSVDLPVPDYEAALGRSVKGMKIGIPREYRVDGMPGEIEELWQKGIQYLKDAGAEIVDISLPHTKYALPAYYIVAPAEASSNLARYDGVRYGLRVPGKDIADMYEQTRAAGFGKEVKRRIMIGTYVLSAGYYDAYYLRAQKVRTLIKKDFEDVFAKGVDAILTPATPSAAFSLADEVLANDPVKMYLNDIFTVIVNMAGLPGIAVPAGLNGQGLPLGLQLIGRPFEEETLFQAAHVIEQAAGRFTPAKWW.

Residues K79 and S159 each act as charge relay system in the active site. The Acyl-ester intermediate role is filled by S183.

Belongs to the amidase family. GatA subfamily. In terms of assembly, heterotrimer of A, B and C subunits.

The enzyme catalyses L-glutamyl-tRNA(Gln) + L-glutamine + ATP + H2O = L-glutaminyl-tRNA(Gln) + L-glutamate + ADP + phosphate + H(+). In terms of biological role, allows the formation of correctly charged Gln-tRNA(Gln) through the transamidation of misacylated Glu-tRNA(Gln) in organisms which lack glutaminyl-tRNA synthetase. The reaction takes place in the presence of glutamine and ATP through an activated gamma-phospho-Glu-tRNA(Gln). The protein is Glutamyl-tRNA(Gln) amidotransferase subunit A of Brucella melitensis biotype 2 (strain ATCC 23457).